Reading from the N-terminus, the 677-residue chain is Mitochondrial 15S rRNA processing factor ppr3 (677 aa).

A mitochondrion-targeting transit peptide spans 1 to 43 (MFTEICGKLRTCIYKKVAFSRPLGCNLRQLPVFRDFHNSVSCL). 6 PPR repeats span residues 210 to 244 (SVYLLNILLHASAKHSTLEETLNVYNAYNQFQLKP), 245 to 279 (DNYTFVSLIIAYSLHKQIVKAFSLLSEMKRLKIEA), 280 to 314 (NTHVFNTYIAILYHERLYEQAWRLFDYMKFKSLQS), 317 to 351 (DDKTYSYMISVCTAERKVEKALNLYQEMQERPINP), 355 to 390 (SSRTIDAILRALARYPRYHSKFWSIFEELRAEQWKP), and 569 to 604 (DIHVYACAINGASVSNDFAFGYAVWLEYLHCKSYLP).

Belongs to the CCM1 family. In terms of assembly, binds to mitochondrial small subunit 15S rRNA.

It is found in the mitochondrion. Its function is as follows. Regulates mitochondrial small subunit maturation by controlling 15S rRNA 5'-end processing. Localizes to the 5' precursor of the 15S rRNA in a position that is subsequently occupied by mS47 in the mature yeast mtSSU. Uses structure and sequence-specific RNA recognition, binding to a single-stranded region of the precursor and specifically recognizing bases -6 to -1. The exchange of Ccm1 for mS47 is coupled to the irreversible removal of precursor rRNA that is accompanied by conformational changes of the mitoribosomal proteins uS5m and mS26. These conformational changes signal completion of 5'-end rRNA processing through protection of the mature 5'-end of the 15S rRNA and stabilization of mS47. The removal of the 5' precursor together with the dissociation of Ccm1 may be catalyzed by the 5'-3' exoribonuclease Pet127. Involved in the specific removal of group I introns in mitochondrial encoded transcripts. This chain is Mitochondrial 15S rRNA processing factor ppr3 (dmr1), found in Schizosaccharomyces japonicus (strain yFS275 / FY16936) (Fission yeast).